The chain runs to 120 residues: Large ribosomal subunit protein uL18c (120 aa).

It belongs to the universal ribosomal protein uL18 family. In terms of assembly, part of the 50S ribosomal subunit; contacts the 5S rRNA.

The protein localises to the plastid. The protein resides in the chloroplast. Functionally, binds 5S rRNA, forms part of the central protuberance of the 50S subunit. This Pyropia yezoensis (Susabi-nori) protein is Large ribosomal subunit protein uL18c (rpl18).